The sequence spans 282 residues: Bifunctional protein FolD (282 aa).

NADP(+) contacts are provided by residues 164 to 166 (GAS), Ile-189, and Ile-230.

Belongs to the tetrahydrofolate dehydrogenase/cyclohydrolase family. Homodimer.

It carries out the reaction (6R)-5,10-methylene-5,6,7,8-tetrahydrofolate + NADP(+) = (6R)-5,10-methenyltetrahydrofolate + NADPH. The catalysed reaction is (6R)-5,10-methenyltetrahydrofolate + H2O = (6R)-10-formyltetrahydrofolate + H(+). The protein operates within one-carbon metabolism; tetrahydrofolate interconversion. Its function is as follows. Catalyzes the oxidation of 5,10-methylenetetrahydrofolate to 5,10-methenyltetrahydrofolate and then the hydrolysis of 5,10-methenyltetrahydrofolate to 10-formyltetrahydrofolate. This chain is Bifunctional protein FolD, found in Campylobacter jejuni subsp. doylei (strain ATCC BAA-1458 / RM4099 / 269.97).